The chain runs to 705 residues: CAP-Gly domain-containing linker protein 4 (705 aa).

3 ANK repeats span residues 65–101, 149–180, and 186–215; these read TSVS…NVND, TNMN…DVDA, and NFGT…NPAF. The CAP-Gly 1 domain maps to 303-345; the sequence is GTTEFASGQWAGIELDEPEGKNNGSVGKVQYFKCAPKYGIFAP. Disordered regions lie at residues 391 to 410 and 431 to 479; these read MTSK…PGEE and TSSL…ANNS. Residues 441–452 are compositionally biased toward polar residues; that stretch reads PKKQNAISSNKK. The segment covering 455-479 has biased composition (low complexity); sequence SKSPSLSSRASAGLNSSATSTANNS. A CAP-Gly 2 domain is found at 505–547; the sequence is GTTNFAPGYWYGIELEKPHGKNDGSVGGVQYFSCSPRYGIFAP. Phosphoserine is present on residues S557 and S609. A CAP-Gly 3 domain is found at 644-686; sequence GPTDFASGIWLGLELRSAKGKNDGSVGDKRYFTCKPNHGVLVR.

This chain is CAP-Gly domain-containing linker protein 4 (CLIP4), found in Homo sapiens (Human).